The sequence spans 159 residues: Putative pre-16S rRNA nuclease (159 aa).

The protein belongs to the YqgF nuclease family.

Its subcellular location is the cytoplasm. Functionally, could be a nuclease involved in processing of the 5'-end of pre-16S rRNA. The polypeptide is Putative pre-16S rRNA nuclease (Thermobifida fusca (strain YX)).